Here is a 95-residue protein sequence, read N- to C-terminus: MGEIRLVNIGFGNIVSANRIVAIVSPESAPIKRIISEARERGTLIDATYGRRTRAVVITDSDHVVLSAVQPETVAHRLTARDASLAAAEEEEGEE.

It belongs to the RemA family.

The polypeptide is Putative regulatory protein STH1338 (Symbiobacterium thermophilum (strain DSM 24528 / JCM 14929 / IAM 14863 / T)).